Here is a 209-residue protein sequence, read N- to C-terminus: Imidazole glycerol phosphate synthase subunit HisH (209 aa).

The Glutamine amidotransferase type-1 domain occupies 1–205 (MIAIIDYGMG…KGVVETWKSS (205 aa)). Cysteine 79 functions as the Nucleophile in the catalytic mechanism. Catalysis depends on residues histidine 180 and glutamate 182.

As to quaternary structure, heterodimer of HisH and HisF.

The protein localises to the cytoplasm. It carries out the reaction 5-[(5-phospho-1-deoxy-D-ribulos-1-ylimino)methylamino]-1-(5-phospho-beta-D-ribosyl)imidazole-4-carboxamide + L-glutamine = D-erythro-1-(imidazol-4-yl)glycerol 3-phosphate + 5-amino-1-(5-phospho-beta-D-ribosyl)imidazole-4-carboxamide + L-glutamate + H(+). The enzyme catalyses L-glutamine + H2O = L-glutamate + NH4(+). It participates in amino-acid biosynthesis; L-histidine biosynthesis; L-histidine from 5-phospho-alpha-D-ribose 1-diphosphate: step 5/9. Its function is as follows. IGPS catalyzes the conversion of PRFAR and glutamine to IGP, AICAR and glutamate. The HisH subunit catalyzes the hydrolysis of glutamine to glutamate and ammonia as part of the synthesis of IGP and AICAR. The resulting ammonia molecule is channeled to the active site of HisF. The protein is Imidazole glycerol phosphate synthase subunit HisH of Bacillus anthracis (strain A0248).